Here is a 1550-residue protein sequence, read N- to C-terminus: Protein TIME FOR COFFEE (1550 aa).

Disordered regions lie at residues 1 to 191, 207 to 304, 325 to 505, 708 to 736, 779 to 805, 859 to 1023, 1086 to 1130, 1163 to 1196, 1213 to 1296, and 1321 to 1435; these read MDRN…PVSP, VPRK…PVAV, TSKQ…SERG, QGSVLGRSSNPVQDKNSQSTSKSSETAQR, RPPNSGITSSGPTATSTSMNGSASATP, FNGS…KAGV, ASLE…QSIA, ALPQSSGSLPTSHHQQLLQQQQQQHMQRSQSQQP, AASA…SVAA, and NSKP…PKHG. A compositionally biased stretch (basic and acidic residues) spans 43-80; that stretch reads EAARLRDRGGSNKKDRDRERDRDRERERERDRERDRLN. The segment covering 100–118 has biased composition (acidic residues); it reads DGGDDSSEESVNDDEEYDD. A compositionally biased stretch (low complexity) spans 134 to 151; it reads SNNISAASFSSSLSNHHN. The span at 157–171 shows a compositional bias: basic residues; sequence LHHHHHSHNNNHQRK. The segment covering 241-250 has biased composition (polar residues); it reads RQISSTSPAN. A compositionally biased stretch (low complexity) spans 292-301; that stretch reads KSSSSKLSSP. A compositionally biased stretch (polar residues) spans 348 to 366; sequence RVSSPISNPQTLPQSSITL. Over residues 367-379 the composition is skewed to low complexity; sequence AANSSSSNVSAIA. Positions 409-432 are enriched in polar residues; it reads SKSQVPFSNQLKSSGSGEGNSSVL. Basic and acidic residues-rich tracts occupy residues 447 to 461 and 473 to 490; these read DSEKKENNLSKDETI and SDGEGAKSSSPEKEKFEI. Polar residues-rich tracts occupy residues 713-736, 783-803, and 884-992; these read GRSSNPVQDKNSQSTSKSSETAQR, SGITSSGPTATSTSMNGSASA, and LTGQ…NLGL. Positions 1112–1126 are enriched in gly residues; it reads SGGGAIGKTSGGNGG. Residues 1164–1173 show a composition bias toward polar residues; sequence LPQSSGSLPT. Residues 1174–1195 are compositionally biased toward low complexity; it reads SHHQQLLQQQQQQHMQRSQSQQ. Positions 1234 to 1253 are enriched in polar residues; that stretch reads NMTTSPAGTTKFANANSGFP. A compositionally biased stretch (low complexity) spans 1254–1273; sequence QNLVQSSSNQVQSQQWKNNS. 3 stretches are compositionally biased toward polar residues: residues 1274 to 1296, 1321 to 1342, and 1351 to 1360; these read PRTTNTTQAQSPSMLSPSTSVAA, NSKPMTSGSPMQQVQGGTNHQA, and SPSTSSVSKN. The span at 1361 to 1382 shows a compositional bias: low complexity; that stretch reads ASGSPRTTASASSAANKGGQAS. 2 stretches are compositionally biased toward polar residues: residues 1383 to 1397 and 1405 to 1419; these read TTTHSASQPSKNLQP and GGRNNGPSVLGNPTT. Residues 1420 to 1435 show a composition bias toward low complexity; the sequence is SSGSKSQQQQQLPKHG.

In terms of assembly, interacts with MYC2.

It is found in the nucleus. Functionally, regulator of normal clock function. Acts in the mid to late night. Contributes to the amplitude of circadian clocks. May act on the transcriptional induction of LATE ELONGATED HYPOCOTYL (LHY). Inhibits MYC2 protein accumulation, acting as a negative factor in the JA-signaling pathway. This is Protein TIME FOR COFFEE (TIC) from Arabidopsis thaliana (Mouse-ear cress).